A 120-amino-acid polypeptide reads, in one-letter code: Membrane-anchored ubiquitin-fold protein 4 (120 aa).

The region spanning 7 to 73 (VELKFRLYDG…LENGKTVAQC (67 aa)) is the Ubiquitin-like domain. The S-palmitoyl cysteine moiety is linked to residue Cys115. Cysteine methyl ester is present on Cys117. Residue Cys117 is the site of S-farnesyl cysteine attachment. The propeptide at 118–120 (TIM) is removed in mature form.

As to expression, ubiquitous.

It localises to the cell membrane. May serve as docking site to facilitate the association of other proteins to the plasma membrane. In Arabidopsis thaliana (Mouse-ear cress), this protein is Membrane-anchored ubiquitin-fold protein 4 (MUB4).